The sequence spans 75 residues: Protein BRICK1 (75 aa).

Ala-2 bears the N-acetylalanine mark. The stretch at 41 to 72 forms a coiled coil; the sequence is MSCRSRLATLNEKLTALERRIEYIEARVTKGE.

This sequence belongs to the BRK1 family. As to quaternary structure, homotrimer when in free form. Directly interacts with WASF2. Component of the WAVE1 complex composed of ABI2, CYFIP1 or CYFIP2, BRK1, NCKAP1 and WASF1/WAVE1. Within the complex, a heterodimer containing NCKAP1 and CYFIP1 interacts with a heterotrimer formed by WAVE1, ABI2 and BRK1.

Its subcellular location is the cytoplasm. The protein resides in the cytoskeleton. Its function is as follows. Involved in regulation of actin and microtubule organization. Part of a WAVE complex that activates the Arp2/3 complex. As component of the WAVE1 complex, required for BDNF-NTRK2 endocytic trafficking and signaling from early endosomes. The sequence is that of Protein BRICK1 (BRK1) from Homo sapiens (Human).